Consider the following 169-residue polypeptide: Peptide deformylase (169 aa).

Positions 91 and 133 each coordinate Fe cation. Glu134 is an active-site residue. A Fe cation-binding site is contributed by His137.

This sequence belongs to the polypeptide deformylase family. Fe(2+) serves as cofactor.

It carries out the reaction N-terminal N-formyl-L-methionyl-[peptide] + H2O = N-terminal L-methionyl-[peptide] + formate. In terms of biological role, removes the formyl group from the N-terminal Met of newly synthesized proteins. Requires at least a dipeptide for an efficient rate of reaction. N-terminal L-methionine is a prerequisite for activity but the enzyme has broad specificity at other positions. This chain is Peptide deformylase, found in Escherichia coli (strain SMS-3-5 / SECEC).